The chain runs to 477 residues: Otoconin-90 (477 aa).

The N-terminal stretch at Met-1 to Gly-17 is a signal peptide. An N-linked (GlcNAc...) asparagine glycan is attached at Asn-38. 3 phospholipase A2-like regions span residues Leu-76–Cys-190, Met-305–Cys-361, and Cys-373–Cys-425. Intrachain disulfides connect Cys-85-Cys-145, Cys-99-Cys-190, Cys-101-Cys-117, Cys-116-Cys-172, Cys-123-Cys-165, Cys-132-Cys-158, and Cys-152-Cys-163. The N-linked (GlcNAc...) asparagine glycan is linked to Asn-179. Asn-407 carries an N-linked (GlcNAc...) asparagine glycan. The disordered stretch occupies residues Ser-428 to Arg-477. Over residues Ser-442 to Gln-452 the composition is skewed to acidic residues.

This sequence belongs to the phospholipase A2 family. As to quaternary structure, interacts with OTOL1.

Its subcellular location is the secreted. Major protein of the otoconia, a calcium carbonate structure in the saccule and utricle of the ear. Together with OTOL1, acts as a scaffold for otoconia biomineralization: sequesters calcium and forms interconnecting fibrils between otoconia that are incorporated into the calcium crystal structure. Together with OTOL1, modulates calcite crystal morphology and growth kinetics. It is unlikely that this protein has phospholipase A2 activity. The protein is Otoconin-90 of Homo sapiens (Human).